Consider the following 181-residue polypeptide: Putative ankyrin repeat protein RF_0782 (181 aa).

ANK repeat units lie at residues 24 to 53 (YHYS…DINF) and 54 to 83 (GSTP…NTQI).

The chain is Putative ankyrin repeat protein RF_0782 from Rickettsia felis (strain ATCC VR-1525 / URRWXCal2) (Rickettsia azadi).